Here is a 334-residue protein sequence, read N- to C-terminus: RNA polymerase sigma factor RpoS (334 aa).

The tract at residues 21 to 50 (PGIMLDESSADEQPSPRATPKATTSFSSKQ) is disordered. Positions 61–94 (DATQLYLNEIGFSPLLTPEEEVHFARLAQKGDPA) are sigma-70 factor domain-1. The segment at 99-169 (MIESNLRLVV…ERAIMNQTRT (71 aa)) is sigma-70 factor domain-2. An Interaction with polymerase core subunit RpoC motif is present at residues 123–126 (DLIE). A sigma-70 factor domain-3 region spans residues 179–254 (ELNVYLRAAR…DDRPTDPCEL (76 aa)). The tract at residues 267–320 (WLTELTDKQREVVIRRFGLRGHESSTLEEVGQEIGLTRERVRQIQVEALKRLRE) is sigma-70 factor domain-4. The segment at residues 293 to 312 (LEEVGQEIGLTRERVRQIQV) is a DNA-binding region (H-T-H motif).

Belongs to the sigma-70 factor family. RpoS subfamily. In terms of assembly, interacts with the RNA polymerase core enzyme.

The protein localises to the cytoplasm. Its function is as follows. Sigma factors are initiation factors that promote the attachment of RNA polymerase to specific initiation sites and are then released. This sigma factor is the master transcriptional regulator of the stationary phase and the general stress response. This is RNA polymerase sigma factor RpoS from Pseudomonas aeruginosa (strain ATCC 15692 / DSM 22644 / CIP 104116 / JCM 14847 / LMG 12228 / 1C / PRS 101 / PAO1).